A 24-amino-acid polypeptide reads, in one-letter code: Coenzyme PQQ synthesis protein A (24 aa).

Positions 16 to 20 (EITMY) form a cross-link, pyrroloquinoline quinone (Glu-Tyr).

The protein belongs to the PqqA family.

The protein operates within cofactor biosynthesis; pyrroloquinoline quinone biosynthesis. Functionally, required for coenzyme pyrroloquinoline quinone (PQQ) biosynthesis. PQQ is probably formed by cross-linking a specific glutamate to a specific tyrosine residue and excising these residues from the peptide. This Variovorax paradoxus (strain S110) protein is Coenzyme PQQ synthesis protein A.